The following is a 391-amino-acid chain: 5-amino-6-(D-ribitylamino)uracil--L-tyrosine 4-hydroxyphenyl transferase (391 aa).

One can recognise a Radical SAM core domain in the interval 55 to 302 (VTYVINRNIN…GAVARIYLGN (248 aa)). [4Fe-4S] cluster is bound by residues C69, C73, and C76.

It belongs to the radical SAM superfamily. CofH family. Consists of two subunits, CofG and CofH. [4Fe-4S] cluster is required as a cofactor.

It catalyses the reaction 5-amino-6-(D-ribitylamino)uracil + L-tyrosine + S-adenosyl-L-methionine = 5-amino-5-(4-hydroxybenzyl)-6-(D-ribitylimino)-5,6-dihydrouracil + 2-iminoacetate + 5'-deoxyadenosine + L-methionine + H(+). It participates in cofactor biosynthesis; coenzyme F0 biosynthesis. Catalyzes the radical-mediated synthesis of 5-amino-5-(4-hydroxybenzyl)-6-(D-ribitylimino)-5,6-dihydrouracil from 5-amino-6-(D-ribitylamino)uracil and L-tyrosine. The polypeptide is 5-amino-6-(D-ribitylamino)uracil--L-tyrosine 4-hydroxyphenyl transferase (Nostoc sp. (strain PCC 7120 / SAG 25.82 / UTEX 2576)).